Reading from the N-terminus, the 484-residue chain is Cobyric acid synthase (484 aa).

The GATase cobBQ-type domain occupies glutamine 249–threonine 438. Residue cysteine 330 is the Nucleophile of the active site. The active site involves histidine 430.

The protein belongs to the CobB/CobQ family. CobQ subfamily.

Its pathway is cofactor biosynthesis; adenosylcobalamin biosynthesis. Catalyzes amidations at positions B, D, E, and G on adenosylcobyrinic A,C-diamide. NH(2) groups are provided by glutamine, and one molecule of ATP is hydrogenolyzed for each amidation. This chain is Cobyric acid synthase, found in Vibrio cholerae serotype O1 (strain ATCC 39315 / El Tor Inaba N16961).